The primary structure comprises 373 residues: Probable G-protein coupled receptor 173 (373 aa).

Topologically, residues 1–26 (MANTTGEPEEVSGALSLPSASAYVKL) are extracellular. N-linked (GlcNAc...) asparagine glycosylation occurs at Asn-3. Residues 27-47 (VLLGLIMCVSLAGNAILSLLV) form a helical membrane-spanning segment. Residues 48–59 (LKERALHKAPYY) are Cytoplasmic-facing. Residues 60–80 (FLLDLCLADGIRSAICFPFVL) form a helical membrane-spanning segment. Residues 81–97 (ASVRHGSSWTFSALSCK) are Extracellular-facing. Cys-96 and Cys-174 are disulfide-bonded. The helical transmembrane segment at 98–118 (IVAFMAVLFCFHAAFMLFCIS) threads the bilayer. Residues 119 to 139 (VTRYMAIAHHRFYAKRMTLWT) are Cytoplasmic-facing. A helical transmembrane segment spans residues 140–160 (CAAVICMAWTLSVAMAFPPVF). Over 161–188 (DVGTYKFIREEDQCIFEHRYFKANDTLG) the chain is Extracellular. N-linked (GlcNAc...) asparagine glycosylation occurs at Asn-184. Residues 189–209 (FMLMLAVLMAATHAVYGKLLL) traverse the membrane as a helical segment. The Cytoplasmic portion of the chain corresponds to 210–287 (FEYRHRKMKP…VKGEKQLGRM (78 aa)). The chain crosses the membrane as a helical span at residues 288 to 308 (FYAITLLFLLLWSPYIVACYW). Residues 309 to 322 (RVFVKACAVPHRYL) lie on the Extracellular side of the membrane. Residues 323-343 (ATAVWMSFAQAAVNPIVCFLL) traverse the membrane as a helical segment. Residues 344-373 (NKDLKKCLRTHAPCWGTGGAPAPREPYCVM) lie on the Cytoplasmic side of the membrane.

It belongs to the G-protein coupled receptor 1 family. As to expression, expressed in the ovary, specifically in granulosa cells of follicles that have passed the primary stage and in oocytes (at protein level). Expressed in preadipocytes.

Its subcellular location is the cell membrane. Is a receptor for the SMIM20 derived peptides Phoenixin-14 and Phoenixin-20. It mediates the Phoenixin-14 and Phoenixin-20 augmentation of gonadotropin-releasing hormone (GNRH) signaling in the hypothalamus and pituitary gland. In the ovary, it mediates the effects of Phoenixin-14 and Phoenixin-20 induced granulosa cell proliferation during follicular growth. The protein is Probable G-protein coupled receptor 173 (Gpr173) of Mus musculus (Mouse).